The primary structure comprises 117 residues: Ig heavy chain V-A2 region K-25 (117 aa).

Gln-1 is subject to Pyrrolidone carboxylic acid. One can recognise an Ig-like domain in the interval 1 to 106 (QSVKESEGGL…GLSYLKSSVD (106 aa)). Residues Cys-21 and Cys-91 are joined by a disulfide bond.

The protein is Ig heavy chain V-A2 region K-25 of Oryctolagus cuniculus (Rabbit).